A 216-amino-acid polypeptide reads, in one-letter code: Large ribosomal subunit protein uL3 (216 aa).

Position 153 is an N5-methylglutamine (Gln-153).

Belongs to the universal ribosomal protein uL3 family. In terms of assembly, part of the 50S ribosomal subunit. Forms a cluster with proteins L14 and L19. Post-translationally, methylated by PrmB.

Functionally, one of the primary rRNA binding proteins, it binds directly near the 3'-end of the 23S rRNA, where it nucleates assembly of the 50S subunit. This Burkholderia ambifaria (strain MC40-6) protein is Large ribosomal subunit protein uL3.